The sequence spans 322 residues: Putative HTH-type transcriptional regulatory protein rrnAC2519 (322 aa).

The 58-residue stretch at 132 to 189 (LADVREDRDWSLGRLAKELGVSRRTVSKYEDGMDASVEVAAELEDLFDAPLTSPVSVL) folds into the HTH cro/C1-type domain. The H-T-H motif DNA-binding region spans 143 to 162 (LGRLAKELGVSRRTVSKYED).

This Haloarcula marismortui (strain ATCC 43049 / DSM 3752 / JCM 8966 / VKM B-1809) (Halobacterium marismortui) protein is Putative HTH-type transcriptional regulatory protein rrnAC2519.